Here is a 542-residue protein sequence, read N- to C-terminus: Mitochondrial distribution and morphology protein 34 (542 aa).

The region spanning 1 to 216 is the SMP-LTD domain; it reads MSFRFNKGAF…LPSVIFSMSQ (216 aa). 2 disordered regions span residues 27–58 and 372–435; these read LNSK…TRGP and SSGD…TTAV. Residues 31–48 are compositionally biased toward low complexity; it reads TQSSSQTAPANTTNSAAT. Residues 49–58 show a composition bias toward basic and acidic residues; it reads DEVKQETRGP. Residues 379-394 are compositionally biased toward basic residues; that stretch reads IRRRKIKMGKKSKSKK. Over residues 403-414 the composition is skewed to low complexity; that stretch reads SSPTVVMPSSPS.

It belongs to the MDM34 family. Component of the ER-mitochondria encounter structure (ERMES) or MDM complex, composed of MMM1, MDM10, MDM12 and MDM34.

It is found in the mitochondrion outer membrane. Component of the ERMES/MDM complex, which serves as a molecular tether to connect the endoplasmic reticulum (ER) and mitochondria. Components of this complex are involved in the control of mitochondrial shape and protein biogenesis, and function in nonvesicular lipid trafficking between the ER and mitochondria. MDM34 is required for the interaction of the ER-resident membrane protein MMM1 and the outer mitochondrial membrane-resident beta-barrel protein MDM10. In Lachancea thermotolerans (strain ATCC 56472 / CBS 6340 / NRRL Y-8284) (Yeast), this protein is Mitochondrial distribution and morphology protein 34.